Reading from the N-terminus, the 668-residue chain is Probable syringafactin export ATP-binding/permease protein SyfD (668 aa).

The region spanning 22-260 (LRLQQVSRSF…APEAQPATPP (239 aa)) is the ABC transporter domain. Residue 58–65 (GASGSGKS) participates in ATP binding. Residues 242-263 (RRTAQTTQPAPEAQPATPPGPA) form a disordered region. A compositionally biased stretch (low complexity) spans 245–256 (AQTTQPAPEAQP). A run of 5 helical transmembrane segments spans residues 267 to 287 (LLAS…ALIS), 293 to 313 (LLTM…SAIG), 541 to 561 (LTLL…IGVM), 602 to 622 (MGGV…TLFV), and 631 to 651 (LASV…FGFV).

The protein belongs to the ABC transporter superfamily. Macrolide exporter (TC 3.A.1.122) family. In terms of assembly, probably part of a tripartite efflux system, which is composed of an inner membrane transporter, a periplasmic membrane fusion protein, and an outer membrane component.

The protein localises to the cell inner membrane. Its function is as follows. Probably involved in the export of syringafactins. This is Probable syringafactin export ATP-binding/permease protein SyfD from Pseudomonas syringae pv. tomato (strain ATCC BAA-871 / DC3000).